The following is a 336-amino-acid chain: Phosphonate dehydrogenase (336 aa).

NAD(+) is bound by residues 155–156 (AI), E175, 235–237 (PCR), and D261. The active site involves R237. E266 is a catalytic residue. H292 acts as the Proton donor in catalysis. Position 292-295 (292-295 (HIGS)) interacts with NAD(+).

As to quaternary structure, homodimer.

The enzyme catalyses phosphonate + NAD(+) + H2O = phosphate + NADH + H(+). Its activity is regulated as follows. Inhibited by NaCl, NADH and sulfite. Functionally, catalyzes phosphite (phosphonate) oxidation. This chain is Phosphonate dehydrogenase (ptxD), found in Stutzerimonas stutzeri (Pseudomonas stutzeri).